Here is a 930-residue protein sequence, read N- to C-terminus: Isoleucine--tRNA ligase (930 aa).

The 'HIGH' region motif lies at 57–67; the sequence is PYANGNIHVGH. Residue glutamate 554 participates in L-isoleucyl-5'-AMP binding. A 'KMSKS' region motif is present at residues 595 to 599; the sequence is KMSKS. Lysine 598 serves as a coordination point for ATP. Cysteine 888, cysteine 891, cysteine 908, and cysteine 911 together coordinate Zn(2+).

The protein belongs to the class-I aminoacyl-tRNA synthetase family. IleS type 1 subfamily. In terms of assembly, monomer. Requires Zn(2+) as cofactor.

Its subcellular location is the cytoplasm. It carries out the reaction tRNA(Ile) + L-isoleucine + ATP = L-isoleucyl-tRNA(Ile) + AMP + diphosphate. Functionally, catalyzes the attachment of isoleucine to tRNA(Ile). As IleRS can inadvertently accommodate and process structurally similar amino acids such as valine, to avoid such errors it has two additional distinct tRNA(Ile)-dependent editing activities. One activity is designated as 'pretransfer' editing and involves the hydrolysis of activated Val-AMP. The other activity is designated 'posttransfer' editing and involves deacylation of mischarged Val-tRNA(Ile). The protein is Isoleucine--tRNA ligase of Streptococcus pneumoniae (strain Hungary19A-6).